The sequence spans 184 residues: Probable gluconokinase (184 aa).

Residue 11–18 participates in ATP binding; it reads GVSGSGKS.

The protein belongs to the gluconokinase GntK/GntV family.

The catalysed reaction is D-gluconate + ATP = 6-phospho-D-gluconate + ADP + H(+). It participates in carbohydrate acid metabolism; D-gluconate degradation. The protein is Probable gluconokinase (Idnk) of Mus musculus (Mouse).